Consider the following 485-residue polypeptide: Sulfate adenylyltransferase subunit 1 (485 aa).

One can recognise a tr-type G domain in the interval 30–243 (KGLLRFLTCG…ELLETIDTQR (214 aa)). Residues 39 to 46 (GSVDDGKS) form a G1 region. 39-46 (GSVDDGKS) provides a ligand contact to GTP. The interval 97–101 (GITID) is G2. The tract at residues 118 to 121 (DTPG) is G3. GTP contacts are provided by residues 118-122 (DTPGH) and 173-176 (NKMD). Residues 173-176 (NKMD) form a G4 region. Positions 210–212 (SAL) are G5.

The protein belongs to the TRAFAC class translation factor GTPase superfamily. Classic translation factor GTPase family. CysN/NodQ subfamily. Heterodimer composed of CysD, the smaller subunit, and CysN.

It catalyses the reaction sulfate + ATP + H(+) = adenosine 5'-phosphosulfate + diphosphate. It participates in sulfur metabolism; hydrogen sulfide biosynthesis; sulfite from sulfate: step 1/3. Functionally, with CysD forms the ATP sulfurylase (ATPS) that catalyzes the adenylation of sulfate producing adenosine 5'-phosphosulfate (APS) and diphosphate, the first enzymatic step in sulfur assimilation pathway. APS synthesis involves the formation of a high-energy phosphoric-sulfuric acid anhydride bond driven by GTP hydrolysis by CysN coupled to ATP hydrolysis by CysD. The protein is Sulfate adenylyltransferase subunit 1 of Shewanella oneidensis (strain ATCC 700550 / JCM 31522 / CIP 106686 / LMG 19005 / NCIMB 14063 / MR-1).